The chain runs to 461 residues: Ribitol-5-phosphate transferase FKTN (461 aa).

The Cytoplasmic segment spans residues 1–7 (MSRINKN). The required and sufficient for interaction with POMGNT1 stretch occupies residues 6–27 (KNVVLALLTLTSSAFLLFQLYY). The helical; Signal-anchor for type II membrane protein transmembrane segment at 8–28 (VVLALLTLTSSAFLLFQLYYY) threads the bilayer. The Lumenal segment spans residues 29-461 (KHYLSARNGP…SEWDEVIQLY (433 aa)). A glycan (N-linked (GlcNAc...) asparagine) is linked at Asn92.

Belongs to the LicD transferase family. As to quaternary structure, forms a complex composed of FKTN/fukutin, FKRP and RXYLT1/TMEM5. Interacts (via transmembrane domain) with POMGNT1; the interaction is direct and is required for normal POMGNT1 location in Golgi membranes. Expressed in the retina, with highest levels found in the inner segments of photoreceptors and the outer plexiform layer (at protein level). Expressed at lower levels in the inner and outer nuclear layers, the inner plexiform layers, and the ganglion cell layers of the retina (at protein level). Expressed in the heart, brain, spleen, lung, liver, skeletal muscle, kidney and testis.

The protein resides in the golgi apparatus membrane. Its subcellular location is the cytoplasm. The protein localises to the nucleus. It is found in the endoplasmic reticulum. It catalyses the reaction 3-O-[beta-D-GalNAc-(1-&gt;3)-beta-D-GlcNAc-(1-&gt;4)-(O-6-P-alpha-D-Man)]-Thr-[protein] + CDP-L-ribitol = 3-O-[Rib-ol-P-3-beta-D-GalNAc-(1-&gt;3)-beta-D-GlcNAc-(1-&gt;4)-(O-6-P-alpha-D-Man)]-Thr-[protein] + CMP + H(+). It functions in the pathway protein modification; protein glycosylation. In terms of biological role, catalyzes the transfer of CDP-ribitol to the distal N-acetylgalactosamine of the phosphorylated O-mannosyl trisaccharide (N-acetylgalactosamine-beta-3-N-acetylglucosamine-beta-4-(phosphate-6-)mannose), a carbohydrate structure present in alpha-dystroglycan (DAG1). This constitutes the first step in the formation of the ribitol 5-phosphate tandem repeat which links the phosphorylated O-mannosyl trisaccharide to the ligand binding moiety composed of repeats of 3-xylosyl-alpha-1,3-glucuronic acid-beta-1. Required for normal location of POMGNT1 in Golgi membranes, and for normal POMGNT1 activity. May interact with and reinforce a large complex encompassing the outside and inside of muscle membranes. Could be involved in brain development. The polypeptide is Ribitol-5-phosphate transferase FKTN (Mus musculus (Mouse)).